The following is a 286-amino-acid chain: uncharacterized protein (286 aa).

Positions 36 to 256 (ENPQHHPSIE…IKGCLLVQLK (221 aa)) constitute a Radical SAM core domain. 3 residues coordinate [4Fe-4S] cluster: Cys-50, Cys-54, and Cys-57.

It depends on [4Fe-4S] cluster as a cofactor.

This is an uncharacterized protein from Methanocaldococcus jannaschii (strain ATCC 43067 / DSM 2661 / JAL-1 / JCM 10045 / NBRC 100440) (Methanococcus jannaschii).